A 128-amino-acid polypeptide reads, in one-letter code: Small nuclear ribonucleoprotein SmD3a (128 aa).

A Sm domain is found at 7 to 79 (IPVKLLHESS…VRFLVIPDML (73 aa)). Positions 90–128 (GKGKSASLGVGRGRGAAMRAKGTGRGTGGGRGAVPPVRR) are disordered. Positions 112–121 (TGRGTGGGRG) are enriched in gly residues.

The protein belongs to the snRNP core protein family. In terms of tissue distribution, expressed in young seedlings, roots, leaves, flowers and immature siliques.

The protein localises to the cytoplasm. Its subcellular location is the cytosol. It localises to the nucleus. Its function is as follows. Core component of the spliceosomal U1, U2, U4 and U5 small nuclear ribonucleoproteins (snRNPs), the building blocks of the spliceosome. May play a minor role in the splicing of cellular pre-mRNAs. This is Small nuclear ribonucleoprotein SmD3a from Arabidopsis thaliana (Mouse-ear cress).